The primary structure comprises 97 residues: Small ribosomal subunit protein uS19 (97 aa).

The protein belongs to the universal ribosomal protein uS19 family.

In terms of biological role, protein S19 forms a complex with S13 that binds strongly to the 16S ribosomal RNA. The polypeptide is Small ribosomal subunit protein uS19 (Pelagibacter ubique (strain HTCC1062)).